Consider the following 277-residue polypeptide: Sulfur carrier protein FdhD (277 aa).

Cys-121 (cysteine persulfide intermediate) is an active-site residue. Mo-bis(molybdopterin guanine dinucleotide) is bound at residue 260-265 (FCKPGR).

It belongs to the FdhD family.

The protein resides in the cytoplasm. In terms of biological role, required for formate dehydrogenase (FDH) activity. Acts as a sulfur carrier protein that transfers sulfur from IscS to the molybdenum cofactor prior to its insertion into FDH. In Escherichia coli O8 (strain IAI1), this protein is Sulfur carrier protein FdhD.